The chain runs to 341 residues: Shk1 kinase-binding protein 15 (341 aa).

WD repeat units follow at residues 33–70, 77–114, 119–157, 197–234, and 237–274; these read AHEGALTALAVDGIYLASTSSDETIKIFDHTRNVQIAD, IANACIRDMCFTKNHLLACHDNGQISMWSKGSWLLVHT, SHKGITGIAVHPSEKLALTVGGDGKLRLWDLVRGKGGKV, SSKSQLNALCLYQSKLIVGRDNGTVLVLDTSDGKILHE, and AHKKRVKSVYPVDDYLITASSDGSVCIWDKDWNLVIEH. The tract at residues 293 to 341 is disordered; that stretch reads NSEPKNVEDEAAKRQSLDSETSETSSESESESEYYSTSKQPPVKRTKHA. The segment covering 297 to 309 has biased composition (basic and acidic residues); it reads KNVEDEAAKRQSL.

Negatively regulates pak1/shk1 kinase activity leading to proper execution of cytoskeletal remodeling and cytokinetic functions. Functionally, interacts with pak1/shk1. The sequence is that of Shk1 kinase-binding protein 15 (skb15) from Schizosaccharomyces pombe (strain 972 / ATCC 24843) (Fission yeast).